A 252-amino-acid polypeptide reads, in one-letter code: Imidazole glycerol phosphate synthase subunit HisF (252 aa).

Residues D11 and D130 contribute to the active site.

The protein belongs to the HisA/HisF family. In terms of assembly, heterodimer of HisH and HisF.

The protein resides in the cytoplasm. The enzyme catalyses 5-[(5-phospho-1-deoxy-D-ribulos-1-ylimino)methylamino]-1-(5-phospho-beta-D-ribosyl)imidazole-4-carboxamide + L-glutamine = D-erythro-1-(imidazol-4-yl)glycerol 3-phosphate + 5-amino-1-(5-phospho-beta-D-ribosyl)imidazole-4-carboxamide + L-glutamate + H(+). The protein operates within amino-acid biosynthesis; L-histidine biosynthesis; L-histidine from 5-phospho-alpha-D-ribose 1-diphosphate: step 5/9. IGPS catalyzes the conversion of PRFAR and glutamine to IGP, AICAR and glutamate. The HisF subunit catalyzes the cyclization activity that produces IGP and AICAR from PRFAR using the ammonia provided by the HisH subunit. This chain is Imidazole glycerol phosphate synthase subunit HisF, found in Staphylococcus aureus (strain USA300).